A 260-amino-acid chain; its full sequence is Metallo-beta-lactamase domain-containing protein 1 (260 aa).

Zn(2+)-binding residues include His-118, His-120, Asp-122, His-123, His-173, Asp-196, and His-235.

Belongs to the metallo-beta-lactamase superfamily. Glyoxalase II family. Homodimer. It depends on Zn(2+) as a cofactor.

The protein resides in the cytoplasm. Its subcellular location is the cytosol. The protein localises to the nucleus. The enzyme catalyses a ribonucleotidyl-ribonucleotide-RNA + H2O = a 3'-end ribonucleotide-RNA + a 5'-end 5'-phospho-ribonucleoside-RNA + H(+). Functionally, endoribonuclease that catalyzes the hydrolysis of histone-coding pre-mRNA 3'-end. Involved in histone pre-mRNA processing during the S-phase of the cell cycle, which is required for entering/progressing through S-phase. Cleaves histone pre-mRNA at a major and a minor cleavage site after the 5'-ACCCA-3' and the 5'-ACCCACA-3' sequence, respectively, and located downstream of the stem-loop. May require the presence of the HDE element located at the histone pre-RNA 3'-end to avoid non-specific cleavage. The polypeptide is Metallo-beta-lactamase domain-containing protein 1 (Mus musculus (Mouse)).